The following is a 391-amino-acid chain: L-tryptophan--pyruvate aminotransferase 1 (391 aa).

Residues tyrosine 58, 100–101 (ST), asparagine 168, 191–194 (DFAY), 214–217 (TFSK), and arginine 225 each bind pyridoxal 5'-phosphate. An N6-(pyridoxal phosphate)lysine modification is found at lysine 217.

Belongs to the alliinase family. Pyridoxal 5'-phosphate serves as cofactor. Expressed at the leaf margin and in the vasculature of emerging young leaves. Expressed in the quiescent center and in the vasculature of root tips. Detected in the shoot apical meristem, stems, sepals, stamen filaments, the shoot and root junction, the stigma and the base of the silique.

The protein localises to the cytoplasm. It carries out the reaction L-tryptophan + 2-oxoglutarate = indole-3-pyruvate + L-glutamate. The enzyme catalyses L-tryptophan + pyruvate = indole-3-pyruvate + L-alanine. Its pathway is plant hormone metabolism; auxin biosynthesis. Inhibited by L-kynurenine. Its function is as follows. L-tryptophan aminotransferase involved in auxin (IAA) biosynthesis. Can convert L-tryptophan and pyruvate to indole-3-pyruvic acid (IPA) and alanine. Catalyzes the first step in IPA branch of the auxin biosynthetic pathway. Required for auxin production to initiate multiple change in growth in response to environmental and developmental cues. It is also active with phenylalanine, tyrosine, leucine, alanine, methionine and glutamine. Both TAA1 and TAR2 are required for maintaining proper auxin levels in roots, while TAA1, TAR1 and TAR2 are required for proper embryo patterning. Involved in the maintenance of the root stem cell niches and required for shade avoidance. This chain is L-tryptophan--pyruvate aminotransferase 1 (TAA1), found in Arabidopsis thaliana (Mouse-ear cress).